The chain runs to 368 residues: Left-right determination factor 1 (368 aa).

The signal sequence occupies residues 1–21 (MPFLWLCWALWALSLVSLREA). A propeptide spans 22-76 (LTGEQILGSLLQQLQLDQPPVLDKADVEGMVIPSHVRTQYVALLQHSHASRSRGK) (or 135). Residue asparagine 158 is glycosylated (N-linked (GlcNAc...) asparagine). 4 disulfide bridges follow: cysteine 253–cysteine 266, cysteine 265–cysteine 318, cysteine 295–cysteine 353, and cysteine 299–cysteine 355.

Belongs to the TGF-beta family. Post-translationally, the processing of the protein may also occur at the second R-X-X-R site located at AA 132-135. Processing appears to be regulated in a cell-type specific manner.

Its subcellular location is the secreted. Its function is as follows. Required for left-right axis determination as a regulator of LEFTY2 and NODAL. This is Left-right determination factor 1 (Lefty1) from Mus musculus (Mouse).